The sequence spans 287 residues: Ribosomal RNA small subunit methyltransferase A (287 aa).

Residues N18, L20, G45, E66, D91, and N118 each contribute to the S-adenosyl-L-methionine site.

Belongs to the class I-like SAM-binding methyltransferase superfamily. rRNA adenine N(6)-methyltransferase family. RsmA subfamily.

It localises to the cytoplasm. The catalysed reaction is adenosine(1518)/adenosine(1519) in 16S rRNA + 4 S-adenosyl-L-methionine = N(6)-dimethyladenosine(1518)/N(6)-dimethyladenosine(1519) in 16S rRNA + 4 S-adenosyl-L-homocysteine + 4 H(+). In terms of biological role, specifically dimethylates two adjacent adenosines (A1518 and A1519) in the loop of a conserved hairpin near the 3'-end of 16S rRNA in the 30S particle. May play a critical role in biogenesis of 30S subunits. This is Ribosomal RNA small subunit methyltransferase A from Haemophilus influenzae (strain ATCC 51907 / DSM 11121 / KW20 / Rd).